We begin with the raw amino-acid sequence, 381 residues long: Arogenate dehydratase/prephenate dehydratase 2, chloroplastic (381 aa).

Residues 1–32 (MAMHTVRLSPATQLHGGISSNLSPPNRKPNNS) are disordered. The N-terminal 66 residues, 1-66 (MAMHTVRLSP…DANGRDNSVR (66 aa)), are a transit peptide targeting the chloroplast. Positions 18-32 (ISSNLSPPNRKPNNS) are enriched in polar residues. The region spanning 100-275 (RVAYQGVRGA…NVTRFLMLAR (176 aa)) is the Prephenate dehydratase domain. Residues 289–375 (SIVFSLEEGP…TFLRVLGSYP (87 aa)) enclose the ACT domain.

In terms of tissue distribution, expressed in roots, leaves, stems, flowers and siliques. Most abundant in leaves and seeds.

Its subcellular location is the plastid. It is found in the chloroplast stroma. The catalysed reaction is L-arogenate + H(+) = L-phenylalanine + CO2 + H2O. It carries out the reaction prephenate + H(+) = 3-phenylpyruvate + CO2 + H2O. It participates in amino-acid biosynthesis; L-phenylalanine biosynthesis; L-phenylalanine from L-arogenate: step 1/1. The protein operates within amino-acid biosynthesis; L-phenylalanine biosynthesis; phenylpyruvate from prephenate: step 1/1. In terms of biological role, converts the prephenate produced from the shikimate-chorismate pathway into phenylalanine. Dehydratase that uses arogenate and prephenate as substrates. Utilzes more efficiently arogenate than prephenate. Required for chloroplast division prior to ARC5, but in an ARC3- and ARC6-dependent manner, especially involved in the Z-ring formation. The sequence is that of Arogenate dehydratase/prephenate dehydratase 2, chloroplastic from Arabidopsis thaliana (Mouse-ear cress).